Reading from the N-terminus, the 209-residue chain is MARYTGPICRLCRREGMKLYLKGERCFTEHCAFDKRPYAPGDHGRQRGKLSQYGTQLRAKQVMRVIYGIPERQFEHYFEKALGMSGDTRENLVRLVESRVDNIVYRLGFAISRRQARQLVTHGHFSVNGVKIDIPSYKLRPGDIVEVREKSRSLAAIKHAVESSKDRTQVPWVEVDFDSYRGTFLRLPNLEEVTDLPVDVQAIVEFYSR.

In terms of domain architecture, S4 RNA-binding spans 98 to 158 (SRVDNIVYRL…EKSRSLAAIK (61 aa)).

This sequence belongs to the universal ribosomal protein uS4 family. As to quaternary structure, part of the 30S ribosomal subunit. Contacts protein S5. The interaction surface between S4 and S5 is involved in control of translational fidelity.

In terms of biological role, one of the primary rRNA binding proteins, it binds directly to 16S rRNA where it nucleates assembly of the body of the 30S subunit. Its function is as follows. With S5 and S12 plays an important role in translational accuracy. The polypeptide is Small ribosomal subunit protein uS4 (Pseudothermotoga lettingae (strain ATCC BAA-301 / DSM 14385 / NBRC 107922 / TMO) (Thermotoga lettingae)).